We begin with the raw amino-acid sequence, 489 residues long: MYSFPNSFRFGWSQAGFQSEMGTPGSEDPNTDWYKWVHDPENMAAGLVSGDLPENGPGYWGNYKTFHDNAQKMGLKIARLNVEWSRIFPNPLPRPQNFDESKQDVTEVEINENELKRLDEYANKDALNHYREIFKDLKSRGLYFILNMYHWPLPLWLHDPIRVRRGDFTGPSGWLSTRTVYEFARFSAYIAWKFDDLVDEYSTMNEPNVVGGLGYVGVKSGFPPGYLSFELSRRAMYNIIQAHARAYDGIKSVSKKPVGIIYANSSFQPLTDKDMEAVEMAENDNRWWFFDAIIRGEITRGNEKIVRDDLKGRLDWIGVNYYTRTVVKRTEKGYVSLGGYGHGCERNSVSLAGLPTSDFGWEFFPEGLYDVLTKYWNRYHLYMYVTENGIADDADYQRPYYLVSHVYQVHRAINSGADVRGYLHWSLADNYEWASGFSMRFGLLKVDYNTKRLYWRPSALVYREIATNGAITDEIEHLNSVPPVKPLRH.

Lys116 bears the N6-methyllysine; partial mark. Lys135 bears the N6-methyllysine mark. The active-site Proton donor is the Glu206. N6-methyllysine; partial occurs at positions 273 and 311. Lys332 carries the post-translational modification N6-methyllysine. Residue Glu387 is the Nucleophile of the active site.

In terms of assembly, homotetramer.

The enzyme catalyses Hydrolysis of terminal non-reducing beta-D-galactose residues in beta-D-galactosides.. In Saccharolobus solfataricus (strain ATCC 35092 / DSM 1617 / JCM 11322 / P2) (Sulfolobus solfataricus), this protein is Beta-galactosidase (lacS).